The following is a 310-amino-acid chain: tRNA-cytidine(32) 2-sulfurtransferase (310 aa).

A PP-loop motif motif is present at residues 45-50 (SGGKDS). [4Fe-4S] cluster-binding residues include cysteine 120, cysteine 123, and cysteine 211.

This sequence belongs to the TtcA family. Homodimer. Mg(2+) serves as cofactor. [4Fe-4S] cluster is required as a cofactor.

Its subcellular location is the cytoplasm. The enzyme catalyses cytidine(32) in tRNA + S-sulfanyl-L-cysteinyl-[cysteine desulfurase] + AH2 + ATP = 2-thiocytidine(32) in tRNA + L-cysteinyl-[cysteine desulfurase] + A + AMP + diphosphate + H(+). Its pathway is tRNA modification. Catalyzes the ATP-dependent 2-thiolation of cytidine in position 32 of tRNA, to form 2-thiocytidine (s(2)C32). The sulfur atoms are provided by the cysteine/cysteine desulfurase (IscS) system. The sequence is that of tRNA-cytidine(32) 2-sulfurtransferase from Shewanella baltica (strain OS185).